The sequence spans 411 residues: NAD-dependent dihydropyrimidine dehydrogenase subunit PreA (411 aa).

Substrate-binding positions include asparagine 76 and 134 to 136 (NFS). Cysteine 137 functions as the Nucleophile in the catalytic mechanism. Residue 201 to 202 (NT) participates in substrate binding. 4Fe-4S ferredoxin-type domains follow at residues 335–367 (VYPRINLDKCVGCGRCYISCYDGGHQAMEWSEK) and 369–398 (RTPHCNTEKCVGCLLCGHVCPVGCIELGEV). Residues cysteine 344, cysteine 347, cysteine 350, cysteine 354, cysteine 378, cysteine 381, cysteine 384, and cysteine 388 each contribute to the [4Fe-4S] cluster site.

The protein belongs to the dihydropyrimidine dehydrogenase family. In terms of assembly, heterotetramer of 2 PreA and 2 PreT subunits. Requires [4Fe-4S] cluster as cofactor.

It carries out the reaction 5,6-dihydrouracil + NAD(+) = uracil + NADH + H(+). The catalysed reaction is 5,6-dihydrothymine + NAD(+) = thymine + NADH + H(+). Involved in pyrimidine base degradation. Catalyzes physiologically the reduction of uracil to 5,6-dihydrouracil (DHU) by using NADH as a specific cosubstrate. It also catalyzes the reverse reaction and the reduction of thymine to 5,6-dihydrothymine (DHT). The chain is NAD-dependent dihydropyrimidine dehydrogenase subunit PreA (preA) from Escherichia coli O157:H7.